A 68-amino-acid chain; its full sequence is Large ribosomal subunit protein bL31 (68 aa).

Zn(2+) contacts are provided by Cys16, Cys18, Cys37, and Cys40.

It belongs to the bacterial ribosomal protein bL31 family. Type A subfamily. In terms of assembly, part of the 50S ribosomal subunit. Zn(2+) serves as cofactor.

Its function is as follows. Binds the 23S rRNA. The sequence is that of Large ribosomal subunit protein bL31 from Nitrosococcus oceani (strain ATCC 19707 / BCRC 17464 / JCM 30415 / NCIMB 11848 / C-107).